A 309-amino-acid polypeptide reads, in one-letter code: Putative lipid kinase YtlR (309 aa).

The region spanning 1 to 134 (MSHWFFIINP…FHLGSVNFLQ (134 aa)) is the DAGKc domain. Residues 9 to 13 (NPTAG), Thr40, and 69 to 75 (GDGTMHE) each bind ATP. Mg(2+) is bound by residues Asn229, Glu232, and Thr234. The active-site Proton acceptor is Glu289.

This sequence belongs to the diacylglycerol/lipid kinase family. Mg(2+) serves as cofactor.

Functionally, may catalyze the ATP-dependent phosphorylation of lipids other than diacylglycerol (DAG). In fact, is not able to exhibit diacylglycerol kinase activity in vitro. The polypeptide is Putative lipid kinase YtlR (ytlR) (Bacillus subtilis (strain 168)).